Here is a 136-residue protein sequence, read N- to C-terminus: MTQASSQRAVYWGTGRRKTAVARVRLVPGTGKIIINDRPGDQYLQYQEALLASVKGPLEILGLENSYDILVRAHGGGVHGQADAIKLGVARALCEVDPANRGPLKVEGYLKRDPRAVERKKYGLRKARKAPQYSKR.

It belongs to the universal ribosomal protein uS9 family.

In Synechococcus sp. (strain JA-2-3B'a(2-13)) (Cyanobacteria bacterium Yellowstone B-Prime), this protein is Small ribosomal subunit protein uS9.